The following is a 1024-amino-acid chain: NLR family CARD domain-containing protein 4 (1024 aa).

The CARD domain maps to 1–88 (MNFIRNNRRA…FVYQDLTGQN (88 aa)). The nucleotide-binding domain (NBD) stretch occupies residues 95–298 (EEDLNVLAQN…HVGALTAEVG (204 aa)). ATP contacts are provided by residues Thr135, 172–177 (GKGKST), and His443. The 314-residue stretch at 163 to 476 (SPCLIEGESG…VSKGNSYLNK (314 aa)) folds into the NACHT domain. Residues 356-463 (AHTQTMLFQT…RLSSLLTSKE (108 aa)) form a winged-helix domain (WHD) region. Ser533 is subject to Phosphoserine. LRR repeat units lie at residues 578-598 (FFQG…LFDF), 656-679 (KQEF…DIKY), 735-758 (VTGL…LIDS), 762-785 (LKNL…NLAE), 787-812 (LRSL…DYIV), 824-847 (EMKL…LHNL), 848-870 (IKLS…ALQE), 878-902 (LGEL…LLKQ), 911-933 (KLGL…FLEM), 936-963 (LRDL…VFEN), 965-985 (KQLV…ALVR), and 999-1021 (EVKL…TFKL).

As to quaternary structure, homooligomer; homooligomerizes following activation of Naip proteins by pathogenic proteins such as S.typhimurium (Salmonella) flagellin or PrgJ. Component of the NLRC4 inflammasome, at least composed of NLRC4, caspase-1 (CASP1) and some NAIP protein (Naip, Naip2 or Naip5). Interacts with Naip5 and Naip6; following Naip5 and Naip6 engagement by Salmonella flagellin. Interacts with Naip2; following Naip2 engagement by Salmonella PrgJ. The inflammasome is a huge complex that contains multiple copies of NLRC4 and a single Naip protein chain. Some NLRC4 inflammasomes contain PYCARD/ASC, while some others directly contact and activate CASP1. Interacts with EIF2AK2/PKR. In terms of processing, phosphorylated at Ser-533 following infection of macrophages with S.typhimurium (Salmonella). Phosphorylation is essential for NLRC4 inflammasome function to promote caspase-1 activation and pyroptosis. PRKCD phosphorylates Ser-533 in vitro. In terms of tissue distribution, expressed by intestinal mononuclear phagocytes.

Its subcellular location is the cytoplasm. It is found in the cytosol. The protein resides in the inflammasome. Key component of inflammasomes that indirectly senses specific proteins from pathogenic bacteria and fungi and responds by assembling an inflammasome complex that promotes caspase-1 activation, cytokine production and macrophage pyroptosis. The NLRC4 inflammasome is activated as part of the innate immune response to a range of intracellular bacteria. It senses pathogenic proteins of the type III secretion system (T3SS) and type IV secretion system (T4SS) such as flagellin and PrgJ-like rod proteins via the Naip proteins (Naip1, Naip2 or Naip5): specific Naip proteins recognize and bind pathogenic proteins, driving assembly and activation of the NLRC4 inflammasome. The NLRC4 inflammasome senses Gram-negative bacteria such as L.pneumophila and P.aeruginosa, enteric pathogens S.typhimurium (Salmonella) and S.flexneri and fungal pathogen C.albicans. In intestine, the NLRC4 inflammasome is able to discriminate between commensal and pathogenic bacteria and specifically drives production of interleukin-1 beta (IL1B) in response to infection by Salmonella or P.aeruginosa. In case of L.pneumophila infection the inflammasome acts by activating caspase-7. This chain is NLR family CARD domain-containing protein 4 (Nlrc4), found in Mus musculus (Mouse).